Reading from the N-terminus, the 487-residue chain is ATP synthase subunit beta (487 aa).

Residue 164–171 (GGAGVGKT) coordinates ATP.

Belongs to the ATPase alpha/beta chains family. In terms of assembly, F-type ATPases have 2 components, CF(1) - the catalytic core - and CF(0) - the membrane proton channel. CF(1) has five subunits: alpha(3), beta(3), gamma(1), delta(1), epsilon(1). CF(0) has four main subunits: a(1), b(1), b'(1) and c(9-12).

The protein localises to the cellular thylakoid membrane. It catalyses the reaction ATP + H2O + 4 H(+)(in) = ADP + phosphate + 5 H(+)(out). In terms of biological role, produces ATP from ADP in the presence of a proton gradient across the membrane. The catalytic sites are hosted primarily by the beta subunits. In Synechococcus sp. (strain CC9311), this protein is ATP synthase subunit beta.